Consider the following 500-residue polypeptide: MSLNRVLHIFLIAYLACTALTHDFDDTIAVVGAGYSGLSAAFTLVKKGYTNVEIYESQGEVGGYVYSVDYNNVAHDLATYALTPAYWKFQEAMKSIGVGFCELDVAIVQTNSTPVSVPFEKWMAAYWAAKVPNPLNLVRKVSTQVSTYVEVWKKLFNMDFIDTSTKRTNRLFPLKTNDVDVLAQFSMPMKDFVALHKLDLLEPLFIQATDSQAYGPYDTTPALYYMVWFPPNLFNGEENTVPCGTYNSMQSMAEHMAEWLKSKGVTFHMNTKVTKISRATDGSSPSLLEEGVATPKLFDTIISTNKLPSANRAEVVTPLLPKEREAADTYEELQMFSALLETNRSDAIPTTGFLMVDADAIIAHDPNTGFWGCLNAERRGGYSDENAILSSDTVTRVSAIYYYTERANNERIDFSLDEKIQQVKTNLATWDSATWTNLTSRTFGGYFQRWRTPDVMGQKPWNLADIQGEGDVYYVNSAACGFESVGHVFDCADNLIKDFF.

The N-terminal stretch at 1–21 is a signal peptide; the sequence is MSLNRVLHIFLIAYLACTALT.

As to quaternary structure, homodimer. Requires an oxidized flavin as cofactor. In terms of processing, glycosylated.

It catalyses the reaction (5Z,8Z,11Z,14Z,17Z)-eicosapentaenoate = (5Z,7E,9E,14Z,17Z)-icosapentaenoate. Its function is as follows. Involved in the biosynthesis of conjugated triene-containing fatty acids. Catalyzes the isomerization of a wide range of substrates containing three or more methylene interrupted olefins into a Z,E,E conjugated triene functionality. May be involved in a stress tolerance mechanism as response to intertidal habitats with direct sunlight, desiccation and high temperature. In vitro substrates include arachidonic acid ((5Z,8Z,11Z,14Z)-eicosatetraenoic acid), EPA ((5Z,8Z, 11Z,14Z,17Z)-eicosapentaenoic acid), DHA ((4Z,7Z,10Z,13Z,16Z,19Z)-docosahexenoic acid), adrenic acid ((7Z,10Z,13Z,16Z)-docosatetraenoic acid), anandamide (arachidonyl-N-ethanolamide) and eicosatrienoic acid ((5Z,8Z,11Z)-eicosatrienoic acid). Gamma-linolenic acid (18:3 6Z,9Z,12Z) and dihomo-gamma-linolenic acid (20:3 8Z,11Z,14Z) are transformed into mixtures of conjugated diene and triene fatty acids, linoleic acid is only transformed to a conjugated diene. In Ptilota filicina (Red alga), this protein is Polyenoic fatty acid isomerase.